We begin with the raw amino-acid sequence, 319 residues long: tRNA uridine(34) hydroxylase (319 aa).

The region spanning 133-231 (EDPNSVVIDT…YLEDVSSENS (99 aa)) is the Rhodanese domain. Cysteine 191 (cysteine persulfide intermediate) is an active-site residue.

Belongs to the TrhO family.

It catalyses the reaction uridine(34) in tRNA + AH2 + O2 = 5-hydroxyuridine(34) in tRNA + A + H2O. Its function is as follows. Catalyzes oxygen-dependent 5-hydroxyuridine (ho5U) modification at position 34 in tRNAs. The polypeptide is tRNA uridine(34) hydroxylase (Prochlorococcus marinus (strain NATL2A)).